A 475-amino-acid chain; its full sequence is Lipoprotein lipase (475 aa).

A signal peptide spans 1-27 (MESKALLLLALAVWLQSLTASRGGVAA). The tract at residues 32–53 (RDFIDIESKFALRTPEDTAEDT) is interaction with GPIHBP1. Cys-54 and Cys-67 are joined by a disulfide. Residue Asn-70 is glycosylated (N-linked (GlcNAc...) asparagine). Tyr-121 bears the 3'-nitrotyrosine mark. The Nucleophile role is filled by Ser-159. The Charge relay system role is filled by Asp-183. Position 191 is a 3'-nitrotyrosine (Tyr-191). Ca(2+) contacts are provided by Ala-194, Arg-197, Ser-199, and Asp-202. Residues Cys-243 and Cys-266 are joined by a disulfide bond. The essential for determining substrate specificity stretch occupies residues 243–266 (CNIGEAIRVIAERGLGDVDQLVKC). His-268 serves as the catalytic Charge relay system. Cystine bridges form between Cys-291–Cys-310 and Cys-302–Cys-305. Residues 341–464 (FHYQVKIHFS…KGKAPAVFVK (124 aa)) form the PLAT domain. The residue at position 343 (Tyr-343) is a 3'-nitrotyrosine. N-linked (GlcNAc...) asparagine glycosylation is present at Asn-386. The segment at 417 to 421 (WSDWW) is important for interaction with lipoprotein particles. Positions 430 to 434 (KIRVK) are important for heparin binding. An interaction with GPIHBP1 region spans residues 443-467 (IFCSREKVSHLQKGKAPAVFVKCHD). Cys-445 and Cys-465 are disulfide-bonded.

Belongs to the AB hydrolase superfamily. Lipase family. As to quaternary structure, homodimer. Interacts with GPIHBP1 with 1:1 stoichiometry. Interacts with APOC2; the interaction activates LPL activity in the presence of lipids. Interaction with heparan sulfate proteoglycans is required to protect LPL against loss of activity. Associates with lipoprotein particles in blood plasma. Interacts with LMF1 and SEL1L; interaction with SEL1L is required to prevent aggregation of newly synthesized LPL in the endoplasmic reticulum (ER), and for normal export of LPL from the ER to the extracellular space. Interacts with SORL1; SORL1 acts as a sorting receptor, promoting LPL localization to endosomes and later to lysosomes, leading to degradation of newly synthesized LPL. Post-translationally, tyrosine nitration after lipopolysaccharide (LPS) challenge down-regulates the lipase activity. Highest levels in the spinal cord.

The protein localises to the cell membrane. Its subcellular location is the secreted. The protein resides in the extracellular space. It is found in the extracellular matrix. It catalyses the reaction a triacylglycerol + H2O = a diacylglycerol + a fatty acid + H(+). The enzyme catalyses a 1,2-diacyl-sn-glycero-3-phosphocholine + H2O = a 2-acyl-sn-glycero-3-phosphocholine + a fatty acid + H(+). The catalysed reaction is 1,2,3-tri-(9Z-octadecenoyl)-glycerol + H2O = di-(9Z)-octadecenoylglycerol + (9Z)-octadecenoate + H(+). It carries out the reaction 1,2-di-(9Z-octadecenoyl)-sn-glycero-3-phosphocholine + H2O = (9Z-octadecenoyl)-sn-glycero-3-phosphocholine + (9Z)-octadecenoate + H(+). It catalyses the reaction 1,2,3-tributanoylglycerol + H2O = dibutanoylglycerol + butanoate + H(+). The enzyme catalyses 1,2-dihexadecanoyl-sn-glycero-3-phosphocholine + H2O = hexadecanoyl-sn-glycero-3-phosphocholine + hexadecanoate + H(+). Its activity is regulated as follows. The apolipoprotein APOC2 acts as a coactivator of LPL activity. Ca(2+) binding promotes protein stability and formation of the active homodimer. Interaction with GPIHBP1 protects LPL against inactivation by ANGPTL4. Functionally, key enzyme in triglyceride metabolism. Catalyzes the hydrolysis of triglycerides from circulating chylomicrons and very low density lipoproteins (VLDL), and thereby plays an important role in lipid clearance from the blood stream, lipid utilization and storage. Although it has both phospholipase and triglyceride lipase activities it is primarily a triglyceride lipase with low but detectable phospholipase activity. Mediates margination of triglyceride-rich lipoprotein particles in capillaries. Recruited to its site of action on the luminal surface of vascular endothelium by binding to GPIHBP1 and cell surface heparan sulfate proteoglycans. This Papio anubis (Olive baboon) protein is Lipoprotein lipase (LPL).